The sequence spans 397 residues: Nicotinate phosphoribosyltransferase (397 aa).

The residue at position 221 (H221) is a Phosphohistidine; by autocatalysis.

This sequence belongs to the NAPRTase family. Post-translationally, transiently phosphorylated on a His residue during the reaction cycle. Phosphorylation strongly increases the affinity for substrates and increases the rate of nicotinate D-ribonucleotide production. Dephosphorylation regenerates the low-affinity form of the enzyme, leading to product release.

It catalyses the reaction nicotinate + 5-phospho-alpha-D-ribose 1-diphosphate + ATP + H2O = nicotinate beta-D-ribonucleotide + ADP + phosphate + diphosphate. Its pathway is cofactor biosynthesis; NAD(+) biosynthesis; nicotinate D-ribonucleotide from nicotinate: step 1/1. Functionally, catalyzes the synthesis of beta-nicotinate D-ribonucleotide from nicotinate and 5-phospho-D-ribose 1-phosphate at the expense of ATP. This Herminiimonas arsenicoxydans protein is Nicotinate phosphoribosyltransferase.